A 61-amino-acid polypeptide reads, in one-letter code: Large ribosomal subunit protein uL29 (61 aa).

This sequence belongs to the universal ribosomal protein uL29 family.

The sequence is that of Large ribosomal subunit protein uL29 from Nitratidesulfovibrio vulgaris (strain ATCC 29579 / DSM 644 / CCUG 34227 / NCIMB 8303 / VKM B-1760 / Hildenborough) (Desulfovibrio vulgaris).